We begin with the raw amino-acid sequence, 274 residues long: Formamidopyrimidine-DNA glycosylase (274 aa).

The active-site Schiff-base intermediate with DNA is the Pro2. The active-site Proton donor is the Glu3. Lys57 acts as the Proton donor; for beta-elimination activity in catalysis. Residues His92, Arg111, and Lys152 each contribute to the DNA site. An FPG-type zinc finger spans residues Gln237 to Arg271. The active-site Proton donor; for delta-elimination activity is the Arg261.

It belongs to the FPG family. In terms of assembly, monomer. The cofactor is Zn(2+).

The catalysed reaction is Hydrolysis of DNA containing ring-opened 7-methylguanine residues, releasing 2,6-diamino-4-hydroxy-5-(N-methyl)formamidopyrimidine.. It carries out the reaction 2'-deoxyribonucleotide-(2'-deoxyribose 5'-phosphate)-2'-deoxyribonucleotide-DNA = a 3'-end 2'-deoxyribonucleotide-(2,3-dehydro-2,3-deoxyribose 5'-phosphate)-DNA + a 5'-end 5'-phospho-2'-deoxyribonucleoside-DNA + H(+). In terms of biological role, involved in base excision repair of DNA damaged by oxidation or by mutagenic agents. Acts as a DNA glycosylase that recognizes and removes damaged bases. Has a preference for oxidized purines, such as 7,8-dihydro-8-oxoguanine (8-oxoG). Has AP (apurinic/apyrimidinic) lyase activity and introduces nicks in the DNA strand. Cleaves the DNA backbone by beta-delta elimination to generate a single-strand break at the site of the removed base with both 3'- and 5'-phosphates. This Glaesserella parasuis serovar 5 (strain SH0165) (Haemophilus parasuis) protein is Formamidopyrimidine-DNA glycosylase.